A 455-amino-acid chain; its full sequence is Anaerobic glycerol-3-phosphate dehydrogenase subunit B (455 aa).

The protein belongs to the anaerobic G-3-P dehydrogenase subunit B family. Composed of a catalytic GlpA/B dimer and of membrane bound GlpC. Requires FMN as cofactor.

It catalyses the reaction a quinone + sn-glycerol 3-phosphate = dihydroxyacetone phosphate + a quinol. It participates in polyol metabolism; glycerol degradation via glycerol kinase pathway; glycerone phosphate from sn-glycerol 3-phosphate (anaerobic route): step 1/1. Its function is as follows. Conversion of glycerol 3-phosphate to dihydroxyacetone. Uses fumarate or nitrate as electron acceptor. The protein is Anaerobic glycerol-3-phosphate dehydrogenase subunit B of Aliivibrio fischeri (strain ATCC 700601 / ES114) (Vibrio fischeri).